A 337-amino-acid chain; its full sequence is Inositol 2-dehydrogenase (337 aa).

This sequence belongs to the Gfo/Idh/MocA family. Homotetramer.

The enzyme catalyses myo-inositol + NAD(+) = scyllo-inosose + NADH + H(+). Functionally, involved in the oxidation of myo-inositol (MI) to 2-keto-myo-inositol (2KMI or 2-inosose). The polypeptide is Inositol 2-dehydrogenase (Burkholderia lata (strain ATCC 17760 / DSM 23089 / LMG 22485 / NCIMB 9086 / R18194 / 383)).